Here is a 152-residue protein sequence, read N- to C-terminus: Deoxyuridine 5'-triphosphate nucleotidohydrolase (152 aa).

Residues 72-74 (RSG), asparagine 85, and 89-91 (TID) contribute to the substrate site.

Belongs to the dUTPase family. Mg(2+) is required as a cofactor.

The enzyme catalyses dUTP + H2O = dUMP + diphosphate + H(+). It functions in the pathway pyrimidine metabolism; dUMP biosynthesis; dUMP from dCTP (dUTP route): step 2/2. Functionally, this enzyme is involved in nucleotide metabolism: it produces dUMP, the immediate precursor of thymidine nucleotides and it decreases the intracellular concentration of dUTP so that uracil cannot be incorporated into DNA. This Rhodopseudomonas palustris (strain ATCC BAA-98 / CGA009) protein is Deoxyuridine 5'-triphosphate nucleotidohydrolase.